The following is a 252-amino-acid chain: Acetoacetate decarboxylase (252 aa).

Catalysis depends on Lys116, which acts as the Schiff-base intermediate with acetoacetate.

This sequence belongs to the ADC family.

It catalyses the reaction acetoacetate + H(+) = acetone + CO2. In terms of biological role, catalyzes the conversion of acetoacetate to acetone and carbon dioxide. The polypeptide is Acetoacetate decarboxylase (Paraburkholderia xenovorans (strain LB400)).